The primary structure comprises 685 residues: Putative lipase ROG1 (685 aa).

Serine 269 (charge relay system) is an active-site residue.

This sequence belongs to the putative lipase ROG1 family.

In Saccharomyces cerevisiae (strain ATCC 204508 / S288c) (Baker's yeast), this protein is Putative lipase ROG1 (ROG1).